We begin with the raw amino-acid sequence, 126 residues long: QLELPVKYAVYLIVTSGEASTTYLNFTTSEKTIQTMKHQYKFTNLGKRSLPISVVFWVPVRLNNEIVWDRPQVTFSPNLSSACNTEERSPPHSDFLAELEKTHVLNCSIAVCQRIACDIPYFNIQE.

Asparagine 25, asparagine 78, and asparagine 106 each carry an N-linked (GlcNAc...) asparagine glycan.

Belongs to the integrin alpha chain family. As to quaternary structure, heterodimer of an alpha and a beta chain. ITGAM associates with ITGB2. Found in a complex with CD177 and ITGB2/CD18. Interacts with JAM3. Interacts with THBD. Interacts with TMEM268; this interaction inhibits ITGAM degradation via the endosome-lysosome pathway.

It is found in the cell membrane. It localises to the membrane raft. In terms of biological role, integrin ITGAM/ITGB2 is implicated in various adhesive interactions of monocytes, macrophages and granulocytes as well as in mediating the uptake of complement-coated particles. It is identical with CR-3, the receptor for the iC3b fragment of the third complement component. It probably recognizes the R-G-D peptide in C3b. Integrin ITGAM/ITGB2 is also a receptor for fibrinogen, factor X and ICAM1. It recognizes P1 and P2 peptides of fibrinogen gamma chain. Regulates neutrophil migration. In association with beta subunit ITGB2/CD18, required for CD177-PRTN3-mediated activation of TNF primed neutrophils. May regulate phagocytosis-induced apoptosis in extravasated neutrophils. May play a role in mast cell development. Required with TYROBP/DAP12 in microglia to control production of microglial superoxide ions which promote the neuronal apoptosis that occurs during brain development. In Cavia porcellus (Guinea pig), this protein is Integrin alpha-M (ITGAM).